The primary structure comprises 293 residues: Elongation factor Ts (293 aa).

The interval 79–82 (TDFV) is involved in Mg(2+) ion dislocation from EF-Tu. S149 bears the Phosphoserine mark.

This sequence belongs to the EF-Ts family.

The protein localises to the cytoplasm. Functionally, associates with the EF-Tu.GDP complex and induces the exchange of GDP to GTP. It remains bound to the aminoacyl-tRNA.EF-Tu.GTP complex up to the GTP hydrolysis stage on the ribosome. This chain is Elongation factor Ts (tsf), found in Bacillus subtilis (strain 168).